An 84-amino-acid polypeptide reads, in one-letter code: Small ribosomal subunit protein uS17 (84 aa).

Belongs to the universal ribosomal protein uS17 family. Part of the 30S ribosomal subunit.

Its function is as follows. One of the primary rRNA binding proteins, it binds specifically to the 5'-end of 16S ribosomal RNA. This chain is Small ribosomal subunit protein uS17, found in Clostridium kluyveri (strain NBRC 12016).